The following is a 223-amino-acid chain: Adenylate kinase (223 aa).

Residue 10-15 (GSGKGT) coordinates ATP. Positions 30–59 (ESGAIFREHIGGGTELGKKAKAYIDRGDLV) are NMP. AMP-binding positions include Ser-31, Arg-36, 57-59 (DLV), 84-87 (GFPR), and Gln-91. Residues 125–164 (GRRLCKNNNNHPNNIFIEAIKPNGDVCRVCGGTLSSRSDD) form an LID region. Position 126 (Arg-126) interacts with ATP. Arg-161 and Arg-173 together coordinate AMP. Residue Gly-209 participates in ATP binding.

It belongs to the adenylate kinase family. In terms of assembly, monomer.

Its subcellular location is the cytoplasm. The enzyme catalyses AMP + ATP = 2 ADP. It functions in the pathway purine metabolism; AMP biosynthesis via salvage pathway; AMP from ADP: step 1/1. Functionally, catalyzes the reversible transfer of the terminal phosphate group between ATP and AMP. Plays an important role in cellular energy homeostasis and in adenine nucleotide metabolism. In Desulfovibrio desulfuricans (strain ATCC 27774 / DSM 6949 / MB), this protein is Adenylate kinase.